The chain runs to 89 residues: Large ribosomal subunit protein bL27 (89 aa).

Positions 1-26 are disordered; that stretch reads MATKKAGGSSKNGRDSAGRRLGLKKS.

Belongs to the bacterial ribosomal protein bL27 family.

This chain is Large ribosomal subunit protein bL27, found in Orientia tsutsugamushi (strain Ikeda) (Rickettsia tsutsugamushi).